The sequence spans 122 residues: Large ribosomal subunit protein uL14 (122 aa).

The protein belongs to the universal ribosomal protein uL14 family. As to quaternary structure, part of the 50S ribosomal subunit. Forms a cluster with proteins L3 and L19. In the 70S ribosome, L14 and L19 interact and together make contacts with the 16S rRNA in bridges B5 and B8.

In terms of biological role, binds to 23S rRNA. Forms part of two intersubunit bridges in the 70S ribosome. In Salinibacter ruber (strain DSM 13855 / M31), this protein is Large ribosomal subunit protein uL14.